The chain runs to 509 residues: Monofunctional riboflavin biosynthesis protein RIBA 3, chloroplastic (509 aa).

The N-terminal 43 residues, 1 to 43, are a transit peptide targeting the chloroplast; sequence MMDSALYHPRIFFAHSFINGLYSSPRFANTCWRLVSRSSWEIK. The interval 44-302 is inactive DHBP synthase; the sequence is ASENSDRNVF…LTDLIRYRRK (259 aa). D-ribulose 5-phosphate-binding positions include 125 to 126 and 240 to 244; these read GD and RAGHT. The GTP cyclohydrolase II stretch occupies residues 303–509; the sequence is RDKLVERITV…ISDNNDQPLA (207 aa). 353-357 provides a ligand contact to GTP; the sequence is RVHSE. Residues cysteine 358, cysteine 369, and cysteine 371 each contribute to the Zn(2+) site. GTP-binding positions include glutamine 374, 397–399, and threonine 419; that span reads EGR. The active-site Proton acceptor; for GTP cyclohydrolase activity is aspartate 431. Residue arginine 433 is the Nucleophile; for GTP cyclohydrolase activity of the active site. GTP-binding residues include threonine 454 and lysine 459.

In the N-terminal section; belongs to the DHBP synthase family. It in the C-terminal section; belongs to the GTP cyclohydrolase II family. The cofactor is Zn(2+). Expressed in leaves, shoots, roots, flowers and siliques.

It is found in the plastid. It localises to the chloroplast. It catalyses the reaction GTP + 4 H2O = 2,5-diamino-6-hydroxy-4-(5-phosphoribosylamino)-pyrimidine + formate + 2 phosphate + 3 H(+). It participates in cofactor biosynthesis; riboflavin biosynthesis; 5-amino-6-(D-ribitylamino)uracil from GTP: step 1/4. Involved in riboflavin biosynthesis. Catalyzes the conversion of GTP to 2,5-diamino-6-ribosylamino-4(3H)-pyrimidinone 5'-phosphate (DARP), formate and pyrophosphate. RIBA2 and RIBA3 together are not able to complement the loss of function of RIBA1. The sequence is that of Monofunctional riboflavin biosynthesis protein RIBA 3, chloroplastic (RIBA3) from Arabidopsis thaliana (Mouse-ear cress).